The chain runs to 245 residues: 1-(5-phosphoribosyl)-5-[(5-phosphoribosylamino)methylideneamino] imidazole-4-carboxamide isomerase (245 aa).

The active-site Proton acceptor is the D7. Catalysis depends on D129, which acts as the Proton donor.

This sequence belongs to the HisA/HisF family.

Its subcellular location is the cytoplasm. It carries out the reaction 1-(5-phospho-beta-D-ribosyl)-5-[(5-phospho-beta-D-ribosylamino)methylideneamino]imidazole-4-carboxamide = 5-[(5-phospho-1-deoxy-D-ribulos-1-ylimino)methylamino]-1-(5-phospho-beta-D-ribosyl)imidazole-4-carboxamide. It functions in the pathway amino-acid biosynthesis; L-histidine biosynthesis; L-histidine from 5-phospho-alpha-D-ribose 1-diphosphate: step 4/9. The sequence is that of 1-(5-phosphoribosyl)-5-[(5-phosphoribosylamino)methylideneamino] imidazole-4-carboxamide isomerase from Shewanella sp. (strain ANA-3).